The primary structure comprises 243 residues: Type III pantothenate kinase (243 aa).

D7–K14 provides a ligand contact to ATP. Substrate-binding positions include Y91 and G98–R101. The active-site Proton acceptor is the D100. T122 lines the ATP pocket. Residue T172 coordinates substrate.

Belongs to the type III pantothenate kinase family. Homodimer. Requires NH4(+) as cofactor. K(+) is required as a cofactor.

It localises to the cytoplasm. The enzyme catalyses (R)-pantothenate + ATP = (R)-4'-phosphopantothenate + ADP + H(+). It functions in the pathway cofactor biosynthesis; coenzyme A biosynthesis; CoA from (R)-pantothenate: step 1/5. Its function is as follows. Catalyzes the phosphorylation of pantothenate (Pan), the first step in CoA biosynthesis. This chain is Type III pantothenate kinase, found in Stenotrophomonas maltophilia (strain R551-3).